Consider the following 365-residue polypeptide: Flagellin 1 (365 aa).

The protein belongs to the bacterial flagellin family.

The protein localises to the secreted. Its subcellular location is the bacterial flagellum. Flagellin is the subunit protein which polymerizes to form the filaments of bacterial flagella. This Proteus mirabilis protein is Flagellin 1 (fliC1).